A 232-amino-acid polypeptide reads, in one-letter code: Large ribosomal subunit protein uL10c (232 aa).

The N-terminal 52 residues, 1–52 (MESTLFLSKPLPTTIKTTTHSLSSVYPNPFKPNNLTFPRTTHKHPTTTTITA), are a transit peptide targeting the chloroplast.

Belongs to the universal ribosomal protein uL10 family. Component of the chloroplast large ribosomal subunit (LSU). Mature 70S chloroplast ribosomes of higher plants consist of a small (30S) and a large (50S) subunit. The 30S small subunit contains 1 molecule of ribosomal RNA (16S rRNA) and 24 different proteins. The 50S large subunit contains 3 rRNA molecules (23S, 5S and 4.5S rRNA) and 33 different proteins.

It localises to the plastid. Its subcellular location is the chloroplast. Component of the chloroplast ribosome (chloro-ribosome), a dedicated translation machinery responsible for the synthesis of chloroplast genome-encoded proteins, including proteins of the transcription and translation machinery and components of the photosynthetic apparatus. This chain is Large ribosomal subunit protein uL10c (RPL10), found in Spinacia oleracea (Spinach).